Reading from the N-terminus, the 387-residue chain is Phosphoglycerate kinase (387 aa).

Residues 21 to 23 (DLN), Arg-36, 59 to 62 (HLGR), Arg-113, and Arg-146 contribute to the substrate site. Residues Lys-197, Glu-314, and 340 to 343 (GGDT) contribute to the ATP site.

It belongs to the phosphoglycerate kinase family. Monomer.

It localises to the cytoplasm. It catalyses the reaction (2R)-3-phosphoglycerate + ATP = (2R)-3-phospho-glyceroyl phosphate + ADP. The protein operates within carbohydrate degradation; glycolysis; pyruvate from D-glyceraldehyde 3-phosphate: step 2/5. The sequence is that of Phosphoglycerate kinase from Alcanivorax borkumensis (strain ATCC 700651 / DSM 11573 / NCIMB 13689 / SK2).